The following is a 352-amino-acid chain: C-C chemokine receptor type 5 (352 aa).

The Extracellular portion of the chain corresponds to 1 to 30 (MDYQVSSPTYDIDYNTSEPCQKINVKQIAA). Position 3 is a sulfotyrosine (Y3). 2 O-linked (GalNAc...) serine glycosylation sites follow: S6 and S7. A sulfotyrosine mark is found at Y10 and Y14. 2 disulfides stabilise this stretch: C20-C269 and C101-C178. Residues 31–58 (RLLPLLYSLVFIFGFVGNILVVLILINC) form a helical membrane-spanning segment. At 59-68 (KRLKSMTDIY) the chain is on the cytoplasmic side. A helical transmembrane segment spans residues 69-89 (LLNLAISDLLFLLTVPFWAHY). At 90–102 (AAAQWDFGNTMCQ) the chain is on the extracellular side. The helical transmembrane segment at 103 to 124 (LLTGLYFIGFFSGIFFIILLTI) threads the bilayer. The Cytoplasmic portion of the chain corresponds to 125-141 (DRYLAIVHAVFALKART). Residues 142–166 (VTFGVVTSVITWVVAVFASLPRIIF) form a helical membrane-spanning segment. Residues 167–198 (TRSQREGLHYTCSSHFPYSQYQFWKNFQTLKI) are Extracellular-facing. A helical transmembrane segment spans residues 199–218 (VILGLVLPLLVMVICYSGIL). Over 219–235 (KTLLRCRNEKKRHRAVR) the chain is Cytoplasmic. The helical transmembrane segment at 236–260 (LIFTIMIVYFLFWAPYNIVLLLNTF) threads the bilayer. Over 261–277 (QEFFGLNNCSSSNRLDQ) the chain is Extracellular. Residues 278–301 (AMQVTETLGMTHCCINPIIYAFVG) traverse the membrane as a helical segment. Topologically, residues 302 to 352 (EKFRNYLLVFFQKHIAKRFCKCCSIFQQEAPERASSVYTRSTGEQEISVGL) are cytoplasmic. Residues C321, C323, and C324 are each lipidated (S-palmitoyl cysteine). Phosphoserine; by BARK1 occurs at positions 336, 337, 342, and 349.

Belongs to the G-protein coupled receptor 1 family. In terms of assembly, interacts with PRAF2. Efficient ligand binding to CCL3/MIP-1alpha and CCL4/MIP-1beta requires sulfation, O-glycosylation and sialic acid modifications. Glycosylation on Ser-6 is required for efficient binding of CCL4. Interacts with GRK2. Interacts with ARRB1 and ARRB2. Interacts with CNIH4. Interacts with S100A4; this interaction stimulates T-lymphocyte chemotaxis. Post-translationally, sulfated on at least 2 of the N-terminal tyrosines. Sulfation is required for efficient binding of the chemokines, CCL3 and CCL4. In terms of processing, palmitoylation in the C-terminal is important for cell surface expression. Phosphorylation on serine residues in the C-terminal is stimulated by binding CC chemokines especially by APO-RANTES. Post-translationally, O-glycosylated, but not N-glycosylated. Ser-6 appears to be the major site even if Ser-7 may be also O-glycosylated. Also sialylated glycans present which contribute to chemokine binding. Thr-16 and Ser-17 may also be glycosylated and, if so, with small moieties such as a T-antigen.

The protein resides in the cell membrane. Receptor for a number of inflammatory CC-chemokines including CCL3/MIP-1-alpha, CCL4/MIP-1-beta and RANTES and subsequently transduces a signal by increasing the intracellular calcium ion level. May play a role in the control of granulocytic lineage proliferation or differentiation. Participates in T-lymphocyte migration to the infection site by acting as a chemotactic receptor. This chain is C-C chemokine receptor type 5 (CCR5), found in Cercopithecus cephus (Moustached monkey).